The primary structure comprises 421 residues: 4-hydroxy-3-methylbut-2-en-1-yl diphosphate synthase (flavodoxin) (421 aa).

Residues cysteine 298, cysteine 301, cysteine 344, and glutamate 351 each contribute to the [4Fe-4S] cluster site.

This sequence belongs to the IspG family. [4Fe-4S] cluster is required as a cofactor.

The enzyme catalyses (2E)-4-hydroxy-3-methylbut-2-enyl diphosphate + oxidized [flavodoxin] + H2O + 2 H(+) = 2-C-methyl-D-erythritol 2,4-cyclic diphosphate + reduced [flavodoxin]. It functions in the pathway isoprenoid biosynthesis; isopentenyl diphosphate biosynthesis via DXP pathway; isopentenyl diphosphate from 1-deoxy-D-xylulose 5-phosphate: step 5/6. Functionally, converts 2C-methyl-D-erythritol 2,4-cyclodiphosphate (ME-2,4cPP) into 1-hydroxy-2-methyl-2-(E)-butenyl 4-diphosphate. This is 4-hydroxy-3-methylbut-2-en-1-yl diphosphate synthase (flavodoxin) from Neisseria meningitidis serogroup C (strain 053442).